The following is a 603-amino-acid chain: Keratin, type II cuticular Hb4 (603 aa).

The segment at 1–173 is head; that stretch reads MSCRSYRVSS…PNAQRVKRDE (173 aa). The region spanning 173 to 484 is the IF rod domain; that stretch reads EKEQIKTLNN…RLLEGEEIRI (312 aa). The interval 174-208 is coil 1A; that stretch reads KEQIKTLNNKFASFIDKVRFLEQQNKLLETKWSFL. Residues 209–218 form a linker 1 region; sequence QEQKCARSNL. Positions 219–319 are coil 1B; the sequence is EPLFDNYITN…YHEEIEMLQS (101 aa). The linker 12 stretch occupies residues 320-336; it reads HISETSVIVKMDNSRDL. Positions 337–480 are coil 2; that stretch reads NLDGIIAEVK…VTYRRLLEGE (144 aa). The segment at 481–603 is tail; that stretch reads EIRICEGVGP…STTTSRRTRY (123 aa). The interval 579–603 is disordered; it reads CSGGRGNRSSSVRFSSTTTSRRTRY.

Belongs to the intermediate filament family. In terms of assembly, heterotetramer of two type I and two type II keratins. As to expression, in skin, only expressed in the suprabasal cells of tail scale epidermis. Suprabasally expressed in stratified squamous epithelia and also in the posterior unit of the complex filiform papillae of tongue. Expressed in rare anatomical sites in which an orthokeratinized stratum corneum would be too soft and a hard keratinized structure would be too rigid to meet the functional requirement of the respective epithelia.

This chain is Keratin, type II cuticular Hb4 (Krt84), found in Mus musculus (Mouse).